The primary structure comprises 241 residues: Carboxy-S-adenosyl-L-methionine synthase (241 aa).

Residues Tyr-38, 63 to 65, 88 to 89, 116 to 117, Asn-131, and Arg-198 contribute to the S-adenosyl-L-methionine site; these read GCS, DN, and DI.

This sequence belongs to the class I-like SAM-binding methyltransferase superfamily. Cx-SAM synthase family. In terms of assembly, homodimer.

It carries out the reaction prephenate + S-adenosyl-L-methionine = carboxy-S-adenosyl-L-methionine + 3-phenylpyruvate + H2O. Its function is as follows. Catalyzes the conversion of S-adenosyl-L-methionine (SAM) to carboxy-S-adenosyl-L-methionine (Cx-SAM). The polypeptide is Carboxy-S-adenosyl-L-methionine synthase (Mannheimia succiniciproducens (strain KCTC 0769BP / MBEL55E)).